The chain runs to 126 residues: uncharacterized protein (126 aa).

Residues 5-25 (LIQHITSIFVFSFFFLFFFFS) traverse the membrane as a helical segment.

It localises to the membrane. This is an uncharacterized protein from Saccharomyces cerevisiae (strain ATCC 204508 / S288c) (Baker's yeast).